We begin with the raw amino-acid sequence, 210 residues long: UPF0301 protein Mnod_6933 (210 aa).

Belongs to the UPF0301 (AlgH) family.

The protein is UPF0301 protein Mnod_6933 of Methylobacterium nodulans (strain LMG 21967 / CNCM I-2342 / ORS 2060).